Here is a 340-residue protein sequence, read N- to C-terminus: MSSPSNFKKLQVVSLSKDFRSSTSVVEAHLPEEVPEGMVRVSVKYAGVNASDLNFTNGSYFKNVQPPFDCGFEAAGTVVQIGAGVANVKVGDHVVLMQYGCFAEFLDAPAERCIPVPELKPEYSVLPVSALTAAVALGEVGRVKKGDVALVTAAAGGTGQIAVQLLKHVYGCTVIGTCSSEEKAEFLKSIGCDHVINYKTESLDGRLHELCPKGVDVVYECVGGHTFNDAVRHVAVHARVVIIGSISSYKSGEVVPFSDPSGTSVTMLLLVKSASLNGFFLPQFHDVIPKYMANLLQYLKAGQVKLFVDKKVFHGLSSVADAVDHLYSGANYGKVLVEIQ.

The protein belongs to the zinc-containing alcohol dehydrogenase family. Quinone oxidoreductase subfamily.

The catalysed reaction is 2 a quinone + NADPH + H(+) = 2 a 1,4-benzosemiquinone + NADP(+). This is Probable quinone oxidoreductase from Leishmania amazonensis.